The sequence spans 118 residues: Acidic phospholipase A2 (118 aa).

Ca(2+) contacts are provided by Tyr-25, Gly-27, and Gly-29. His-45 is an active-site residue. Asp-46 lines the Ca(2+) pocket. The active site involves Asp-86.

The protein belongs to the phospholipase A2 family. Group II subfamily. D49 sub-subfamily. Ca(2+) serves as cofactor. In terms of processing, six disulfide bonds are present. Expressed by the venom gland.

It is found in the secreted. The catalysed reaction is a 1,2-diacyl-sn-glycero-3-phosphocholine + H2O = a 1-acyl-sn-glycero-3-phosphocholine + a fatty acid + H(+). In terms of biological role, PLA2 catalyzes the calcium-dependent hydrolysis of the 2-acyl groups in 3-sn-phosphoglycerides. The polypeptide is Acidic phospholipase A2 (Bitis gabonica (Gaboon adder)).